A 389-amino-acid polypeptide reads, in one-letter code: Nicotinate phosphoribosyltransferase (389 aa).

Position 216 is a phosphohistidine; by autocatalysis (histidine 216).

This sequence belongs to the NAPRTase family. Post-translationally, transiently phosphorylated on a His residue during the reaction cycle. Phosphorylation strongly increases the affinity for substrates and increases the rate of nicotinate D-ribonucleotide production. Dephosphorylation regenerates the low-affinity form of the enzyme, leading to product release.

The catalysed reaction is nicotinate + 5-phospho-alpha-D-ribose 1-diphosphate + ATP + H2O = nicotinate beta-D-ribonucleotide + ADP + phosphate + diphosphate. Its pathway is cofactor biosynthesis; NAD(+) biosynthesis; nicotinate D-ribonucleotide from nicotinate: step 1/1. Catalyzes the synthesis of beta-nicotinate D-ribonucleotide from nicotinate and 5-phospho-D-ribose 1-phosphate at the expense of ATP. This Ralstonia nicotianae (strain ATCC BAA-1114 / GMI1000) (Ralstonia solanacearum) protein is Nicotinate phosphoribosyltransferase.